The sequence spans 344 residues: Lipase chaperone (344 aa).

A helical transmembrane segment spans residues 14–34; that stretch reads AVVYGAVGLAAIAGVAMWSGA. Residues 37 to 78 form a disordered region; sequence HGGTGASGEPPDASAARGPAAAPPQAAVPASTSLPPSLAGSS. The segment covering 43-78 has biased composition (low complexity); it reads SGEPPDASAARGPAAAPPQAAVPASTSLPPSLAGSS.

It belongs to the lipase chaperone family.

It localises to the cell inner membrane. In terms of biological role, may be involved in the folding of the extracellular lipase during its passage through the periplasm. The protein is Lipase chaperone (lifO) of Burkholderia cepacia (Pseudomonas cepacia).